We begin with the raw amino-acid sequence, 501 residues long: Ribose import ATP-binding protein RbsA (501 aa).

ABC transporter domains lie at 6 to 242 and 253 to 495; these read LQLS…VGRK and VHGQ…VGKK. 38–45 contributes to the ATP binding site; sequence GENGAGKS.

This sequence belongs to the ABC transporter superfamily. Ribose importer (TC 3.A.1.2.1) family. In terms of assembly, the complex is composed of an ATP-binding protein (RbsA), two transmembrane proteins (RbsC) and a solute-binding protein (RbsB).

The protein resides in the cell inner membrane. It catalyses the reaction D-ribose(out) + ATP + H2O = D-ribose(in) + ADP + phosphate + H(+). In terms of biological role, part of the ABC transporter complex RbsABC involved in ribose import. Responsible for energy coupling to the transport system. This Vibrio vulnificus (strain CMCP6) protein is Ribose import ATP-binding protein RbsA.